Reading from the N-terminus, the 624-residue chain is 1-deoxy-D-xylulose-5-phosphate synthase (624 aa).

Thiamine diphosphate-binding positions include His-74 and 115–117 (GHS). Asp-146 serves as a coordination point for Mg(2+). Thiamine diphosphate is bound by residues 147 to 148 (GA), Asn-175, Tyr-286, and Glu-367. A Mg(2+)-binding site is contributed by Asn-175.

This sequence belongs to the transketolase family. DXPS subfamily. In terms of assembly, homodimer. Mg(2+) is required as a cofactor. It depends on thiamine diphosphate as a cofactor.

The catalysed reaction is D-glyceraldehyde 3-phosphate + pyruvate + H(+) = 1-deoxy-D-xylulose 5-phosphate + CO2. Its pathway is metabolic intermediate biosynthesis; 1-deoxy-D-xylulose 5-phosphate biosynthesis; 1-deoxy-D-xylulose 5-phosphate from D-glyceraldehyde 3-phosphate and pyruvate: step 1/1. Functionally, catalyzes the acyloin condensation reaction between C atoms 2 and 3 of pyruvate and glyceraldehyde 3-phosphate to yield 1-deoxy-D-xylulose-5-phosphate (DXP). The sequence is that of 1-deoxy-D-xylulose-5-phosphate synthase from Alkaliphilus oremlandii (strain OhILAs) (Clostridium oremlandii (strain OhILAs)).